We begin with the raw amino-acid sequence, 534 residues long: Glycerophosphodiester transporter GIT2 (534 aa).

A run of 12 helical transmembrane segments spans residues 63 to 83, 96 to 116, 135 to 155, 163 to 183, 202 to 222, 230 to 250, 289 to 309, 322 to 342, 350 to 370, 377 to 397, 417 to 437, and 453 to 473; these read GAGL…MACL, AISN…LSFG, LIAF…QGFF, FCLG…ASEF, FMID…LWIF, LWRV…FIRL, MIWF…AIIL, WGWS…GAFS, LTLA…SACL, VAAF…GPGG, GIAA…FPAI, and VPFY…FFLC.

It belongs to the major facilitator superfamily. Sugar transporter (TC 2.A.1.1) family.

The protein localises to the cell membrane. Its function is as follows. Probable glycerophosphodiester transporter. Does not possess detectable glycerophosphoinositol (GroPIns) transport activity. Might be involved in the uptake of glycerophosphocholine (GroPCho). The expanded ability to utilize GroPIns and GroPCho results from the organism's pathogenic nature and its need to occupy a variety of environments within its host organism. This possibility is buttressed by the fact that GroPIns and GroPCho are present and abundant in human fluids. In Candida albicans (strain SC5314 / ATCC MYA-2876) (Yeast), this protein is Glycerophosphodiester transporter GIT2.